We begin with the raw amino-acid sequence, 255 residues long: ATP synthase subunit a (255 aa).

6 helical membrane passes run 28–48, 86–106, 125–145, 164–184, 203–223, and 224–244; these read VDSL…FWLG, IAPL…MDLV, ILPT…FFLI, FHPF…IELI, LIFI…GTPW, and AIFH…LTVV.

Belongs to the ATPase A chain family. F-type ATPases have 2 components, CF(1) - the catalytic core - and CF(0) - the membrane proton channel. CF(1) has five subunits: alpha(3), beta(3), gamma(1), delta(1), epsilon(1). CF(0) has three main subunits: a(1), b(2) and c(9-12). The alpha and beta chains form an alternating ring which encloses part of the gamma chain. CF(1) is attached to CF(0) by a central stalk formed by the gamma and epsilon chains, while a peripheral stalk is formed by the delta and b chains.

It is found in the cell inner membrane. In terms of biological role, key component of the proton channel; it plays a direct role in the translocation of protons across the membrane. The chain is ATP synthase subunit a from Alkalilimnicola ehrlichii (strain ATCC BAA-1101 / DSM 17681 / MLHE-1).